The primary structure comprises 455 residues: tRNA modification GTPase MnmE (455 aa).

Residues R26, E86, and R125 each contribute to the (6S)-5-formyl-5,6,7,8-tetrahydrofolate site. The region spanning 222 to 376 (GLKTAIIGRP…VEEKINQIFF (155 aa)) is the TrmE-type G domain. N232 serves as a coordination point for K(+). GTP-binding positions include 232–237 (NVGKSS), 251–257 (TDIAGTT), and 276–279 (DTAG). S236 provides a ligand contact to Mg(2+). K(+) contacts are provided by T251, I253, and T256. T257 provides a ligand contact to Mg(2+). K455 contributes to the (6S)-5-formyl-5,6,7,8-tetrahydrofolate binding site.

Belongs to the TRAFAC class TrmE-Era-EngA-EngB-Septin-like GTPase superfamily. TrmE GTPase family. In terms of assembly, homodimer. Heterotetramer of two MnmE and two MnmG subunits. K(+) is required as a cofactor.

Its subcellular location is the cytoplasm. Exhibits a very high intrinsic GTPase hydrolysis rate. Involved in the addition of a carboxymethylaminomethyl (cmnm) group at the wobble position (U34) of certain tRNAs, forming tRNA-cmnm(5)s(2)U34. This chain is tRNA modification GTPase MnmE, found in Lactococcus lactis subsp. cremoris (strain SK11).